Consider the following 487-residue polypeptide: Variant surface glycoprotein WRATAT B (487 aa).

The signal sequence occupies residues 1-19; the sequence is MWIILALLTLAGSRVAHGA. 4 N-linked (GlcNAc...) asparagine glycosylation sites follow: asparagine 71, asparagine 84, asparagine 418, and asparagine 465. Positions 443 to 468 are disordered; the sequence is KPKAGTEAATTGPGERDAGATANTTG. Serine 470 carries the GPI-anchor amidated serine lipid modification. Positions 471 to 487 are cleaved as a propeptide — removed in mature form; sequence NSFVIKTSPLLFAFLLF.

Its subcellular location is the cell membrane. In terms of biological role, VSG forms a coat on the surface of the parasite. The trypanosome evades the immune response of the host by expressing a series of antigenically distinct VSGs from an estimated 1000 VSG genes. The polypeptide is Variant surface glycoprotein WRATAT B (Trypanosoma brucei rhodesiense).